The chain runs to 270 residues: Catechol 1,2-dioxygenase (270 aa).

4 residues coordinate Fe cation: tyrosine 152, tyrosine 186, histidine 210, and histidine 212.

This sequence belongs to the intradiol ring-cleavage dioxygenase family. It depends on Fe(3+) as a cofactor.

It carries out the reaction catechol + O2 = cis,cis-muconate + 2 H(+). The sequence is that of Catechol 1,2-dioxygenase (catA) from Rhodococcus opacus (Nocardia opaca).